The sequence spans 144 residues: Large ribosomal subunit protein uL13 (144 aa).

Residues 125 to 144 (YRGPEHPHQAQKPQPLEVKA) form a disordered region.

The protein belongs to the universal ribosomal protein uL13 family. Part of the 50S ribosomal subunit.

Its function is as follows. This protein is one of the early assembly proteins of the 50S ribosomal subunit, although it is not seen to bind rRNA by itself. It is important during the early stages of 50S assembly. The protein is Large ribosomal subunit protein uL13 of Aquifex aeolicus (strain VF5).